We begin with the raw amino-acid sequence, 286 residues long: Ribosomal RNA small subunit methyltransferase I (286 aa).

It belongs to the methyltransferase superfamily. RsmI family.

Its subcellular location is the cytoplasm. The enzyme catalyses cytidine(1402) in 16S rRNA + S-adenosyl-L-methionine = 2'-O-methylcytidine(1402) in 16S rRNA + S-adenosyl-L-homocysteine + H(+). Its function is as follows. Catalyzes the 2'-O-methylation of the ribose of cytidine 1402 (C1402) in 16S rRNA. This is Ribosomal RNA small subunit methyltransferase I from Escherichia coli O157:H7.